The primary structure comprises 195 residues: Putative archaetidylserine decarboxylase proenzyme (195 aa).

The Schiff-base intermediate with substrate; via pyruvic acid role is filled by Ser159. Ser159 carries the post-translational modification Pyruvic acid (Ser); by autocatalysis.

The protein belongs to the phosphatidylserine decarboxylase family. PSD-A subfamily. Heterodimer of a large membrane-associated beta subunit and a small pyruvoyl-containing alpha subunit. The cofactor is pyruvate. Post-translationally, is synthesized initially as an inactive proenzyme. Formation of the active enzyme involves a self-maturation process in which the active site pyruvoyl group is generated from an internal serine residue via an autocatalytic post-translational modification. Two non-identical subunits are generated from the proenzyme in this reaction, and the pyruvate is formed at the N-terminus of the alpha chain, which is derived from the carboxyl end of the proenzyme. The autoendoproteolytic cleavage occurs by a canonical serine protease mechanism, in which the side chain hydroxyl group of the serine supplies its oxygen atom to form the C-terminus of the beta chain, while the remainder of the serine residue undergoes an oxidative deamination to produce ammonia and the pyruvoyl prosthetic group on the alpha chain. During this reaction, the Ser that is part of the protease active site of the proenzyme becomes the pyruvoyl prosthetic group, which constitutes an essential element of the active site of the mature decarboxylase. Is synthesized initially as an inactive proenzyme. Formation of the active enzyme involves a self-maturation process in which the active site pyruvoyl group is generated from an internal serine residue via an autocatalytic post-translational modification. Two non-identical subunits are generated from the proenzyme in this reaction, and the pyruvate is formed at the N-terminus of the alpha chain, which is derived from the carboxyl end of the proenzyme. The post-translation cleavage follows an unusual pathway, termed non-hydrolytic serinolysis, in which the side chain hydroxyl group of the serine supplies its oxygen atom to form the C-terminus of the beta chain, while the remainder of the serine residue undergoes an oxidative deamination to produce ammonia and the pyruvoyl prosthetic group on the alpha chain.

It localises to the cell membrane. The enzyme catalyses archaetidylserine + H(+) = archaetidylethanolamine + CO2. Its function is as follows. Catalyzes the formation of archaetidylethanolamine (PtdEtn) from archaetidylserine (PtdSer). The chain is Putative archaetidylserine decarboxylase proenzyme from Archaeoglobus fulgidus (strain ATCC 49558 / DSM 4304 / JCM 9628 / NBRC 100126 / VC-16).